Here is a 367-residue protein sequence, read N- to C-terminus: UDP-galactopyranose mutase (367 aa).

FAD contacts are provided by residues phenylalanine 12, 31–32, asparagine 39, and 56–57; these read EK and HI. Phenylalanine 12 serves as a coordination point for UDP-alpha-D-galactose. UDP-alpha-D-galactose-binding residues include asparagine 80, threonine 152, tryptophan 156, and tyrosine 181. 212–213 provides a ligand contact to FAD; it reads DF. Positions 268, 278, and 311 each coordinate UDP-alpha-D-galactose. Arginine 340 is a binding site for FAD. A UDP-alpha-D-galactose-binding site is contributed by tyrosine 346. 347–352 lines the FAD pocket; sequence YDMHQV.

In terms of assembly, homodimer. Requires FAD as cofactor.

The catalysed reaction is UDP-alpha-D-galactose = UDP-alpha-D-galactofuranose. The protein operates within bacterial outer membrane biogenesis; lipopolysaccharide biosynthesis. Its function is as follows. Catalyzes the interconversion through a 2-keto intermediate of uridine diphosphogalactopyranose (UDP-GalP) into uridine diphosphogalactofuranose (UDP-GalF). This chain is UDP-galactopyranose mutase (glf), found in Escherichia coli (strain K12).